Reading from the N-terminus, the 311-residue chain is Pyrimidine-specific ribonucleoside hydrolase RihA (311 aa).

Residue His240 is part of the active site.

Belongs to the IUNH family. RihA subfamily.

Its function is as follows. Hydrolyzes with equal efficiency cytidine or uridine to ribose and cytosine or uracil, respectively. In Escherichia coli O7:K1 (strain IAI39 / ExPEC), this protein is Pyrimidine-specific ribonucleoside hydrolase RihA.